A 120-amino-acid chain; its full sequence is Alanine racemase (120 aa).

Tyrosine 24 serves as the catalytic Proton acceptor; specific for L-alanine.

Belongs to the alanine racemase family. Homodimer. Pyridoxal 5'-phosphate is required as a cofactor.

The catalysed reaction is L-alanine = D-alanine. Functionally, highly specific to D- and L-alanine and does not catalyze the racemization of other amino acids. The polypeptide is Alanine racemase (Penaeus monodon (Giant tiger prawn)).